The following is a 331-amino-acid chain: Putative phosphoribosylaminoimidazole-succinocarboxamide synthase (331 aa).

It belongs to the SAICAR synthetase family. Highly divergent.

It catalyses the reaction 5-amino-1-(5-phospho-D-ribosyl)imidazole-4-carboxylate + L-aspartate + ATP = (2S)-2-[5-amino-1-(5-phospho-beta-D-ribosyl)imidazole-4-carboxamido]succinate + ADP + phosphate + 2 H(+). It functions in the pathway purine metabolism; IMP biosynthesis via de novo pathway; 5-amino-1-(5-phospho-D-ribosyl)imidazole-4-carboxamide from 5-amino-1-(5-phospho-D-ribosyl)imidazole-4-carboxylate: step 1/2. This chain is Putative phosphoribosylaminoimidazole-succinocarboxamide synthase (purC), found in Archaeoglobus fulgidus (strain ATCC 49558 / DSM 4304 / JCM 9628 / NBRC 100126 / VC-16).